The sequence spans 400 residues: NADH-quinone oxidoreductase subunit D (400 aa).

It belongs to the complex I 49 kDa subunit family. As to quaternary structure, NDH-1 is composed of 14 different subunits. Subunits NuoB, C, D, E, F, and G constitute the peripheral sector of the complex.

The protein resides in the cell inner membrane. It carries out the reaction a quinone + NADH + 5 H(+)(in) = a quinol + NAD(+) + 4 H(+)(out). NDH-1 shuttles electrons from NADH, via FMN and iron-sulfur (Fe-S) centers, to quinones in the respiratory chain. The immediate electron acceptor for the enzyme in this species is believed to be a menaquinone. Couples the redox reaction to proton translocation (for every two electrons transferred, four hydrogen ions are translocated across the cytoplasmic membrane), and thus conserves the redox energy in a proton gradient. This is NADH-quinone oxidoreductase subunit D from Chlorobium phaeobacteroides (strain DSM 266 / SMG 266 / 2430).